A 350-amino-acid polypeptide reads, in one-letter code: Isopentenyl-diphosphate delta-isomerase (350 aa).

15–16 (RK) is a binding site for substrate. FMN is bound by residues S73, 74–76 (SMT), S104, and N132. 104–106 (SQR) serves as a coordination point for substrate. Q167 is a substrate binding site. E168 contributes to the Mg(2+) binding site. FMN is bound by residues K199, T229, 279–281 (GLR), and 300–301 (AM).

Belongs to the IPP isomerase type 2 family. As to quaternary structure, homooctamer. Dimer of tetramers. FMN is required as a cofactor. NADPH serves as cofactor. It depends on Mg(2+) as a cofactor.

It localises to the cytoplasm. The catalysed reaction is isopentenyl diphosphate = dimethylallyl diphosphate. Involved in the biosynthesis of isoprenoids. Catalyzes the 1,3-allylic rearrangement of the homoallylic substrate isopentenyl (IPP) to its allylic isomer, dimethylallyl diphosphate (DMAPP). The chain is Isopentenyl-diphosphate delta-isomerase from Nostoc sp. (strain PCC 7120 / SAG 25.82 / UTEX 2576).